Here is a 440-residue protein sequence, read N- to C-terminus: tRNA-2-methylthio-N(6)-dimethylallyladenosine synthase (440 aa).

An MTTase N-terminal domain is found at 2-118 (PKYYIITYGC…LPKILESLDG (117 aa)). Residues Cys11, Cys47, Cys81, Cys155, Cys159, and Cys162 each coordinate [4Fe-4S] cluster. Residues 141 to 370 (RENKFQAWIP…ENLQRKIIYE (230 aa)) enclose the Radical SAM core domain. Positions 373 to 436 (LSRVGKEEIV…LWSLKGEVIR (64 aa)) constitute a TRAM domain.

Belongs to the methylthiotransferase family. MiaB subfamily. In terms of assembly, monomer. The cofactor is [4Fe-4S] cluster.

The protein resides in the cytoplasm. The catalysed reaction is N(6)-dimethylallyladenosine(37) in tRNA + (sulfur carrier)-SH + AH2 + 2 S-adenosyl-L-methionine = 2-methylsulfanyl-N(6)-dimethylallyladenosine(37) in tRNA + (sulfur carrier)-H + 5'-deoxyadenosine + L-methionine + A + S-adenosyl-L-homocysteine + 2 H(+). Catalyzes the methylthiolation of N6-(dimethylallyl)adenosine (i(6)A), leading to the formation of 2-methylthio-N6-(dimethylallyl)adenosine (ms(2)i(6)A) at position 37 in tRNAs that read codons beginning with uridine. The sequence is that of tRNA-2-methylthio-N(6)-dimethylallyladenosine synthase from Dictyoglomus thermophilum (strain ATCC 35947 / DSM 3960 / H-6-12).